The primary structure comprises 241 residues: 1-(5-phosphoribosyl)-5-[(5-phosphoribosylamino)methylideneamino] imidazole-4-carboxamide isomerase (241 aa).

The Proton acceptor role is filled by Asp-10. Asp-131 (proton donor) is an active-site residue.

Belongs to the HisA/HisF family.

The protein localises to the cytoplasm. It carries out the reaction 1-(5-phospho-beta-D-ribosyl)-5-[(5-phospho-beta-D-ribosylamino)methylideneamino]imidazole-4-carboxamide = 5-[(5-phospho-1-deoxy-D-ribulos-1-ylimino)methylamino]-1-(5-phospho-beta-D-ribosyl)imidazole-4-carboxamide. It participates in amino-acid biosynthesis; L-histidine biosynthesis; L-histidine from 5-phospho-alpha-D-ribose 1-diphosphate: step 4/9. In Bifidobacterium adolescentis (strain ATCC 15703 / DSM 20083 / NCTC 11814 / E194a), this protein is 1-(5-phosphoribosyl)-5-[(5-phosphoribosylamino)methylideneamino] imidazole-4-carboxamide isomerase.